Here is a 294-residue protein sequence, read N- to C-terminus: Elongation factor Ts (294 aa).

Residues 79–82 (TDFV) are involved in Mg(2+) ion dislocation from EF-Tu.

The protein belongs to the EF-Ts family.

It localises to the cytoplasm. Associates with the EF-Tu.GDP complex and induces the exchange of GDP to GTP. It remains bound to the aminoacyl-tRNA.EF-Tu.GTP complex up to the GTP hydrolysis stage on the ribosome. The polypeptide is Elongation factor Ts (tsf) (Geobacillus kaustophilus (strain HTA426)).